Reading from the N-terminus, the 368-residue chain is 3-dehydroquinate synthase (368 aa).

It belongs to the archaeal-type DHQ synthase family.

The enzyme catalyses 2-amino-2,3,7-trideoxy-D-lyxo-hept-6-ulosonate + NAD(+) + H2O = 3-dehydroquinate + NH4(+) + NADH + H(+). Catalyzes the oxidative deamination and cyclization of 2-amino-3,7-dideoxy-D-threo-hept-6-ulosonic acid (ADH) to yield 3-dehydroquinate (DHQ), which is fed into the canonical shikimic pathway of aromatic amino acid biosynthesis. The protein is 3-dehydroquinate synthase of Methanobrevibacter smithii (strain ATCC 35061 / DSM 861 / OCM 144 / PS).